Consider the following 182-residue polypeptide: CDP-diacylglycerol--glycerol-3-phosphate 3-phosphatidyltransferase (182 aa).

The Cytoplasmic portion of the chain corresponds to 2 to 12 (QFNIPTLLTLF). The chain crosses the membrane as a helical span at residues 13–37 (RVILIPFLVVVFYLPFAWAPMVSAL). Over 38–60 (IFCIAAITDWFDGFLARRWNQST) the chain is Periplasmic. The chain crosses the membrane as a helical span at residues 61 to 81 (RFGAFLDPVADKVLVAIAMVL). The Cytoplasmic segment spans residues 82–86 (VTEHY). Residues 87–107 (HSWWVTLPAATMIAREIIISA) traverse the membrane as a helical segment. Topologically, residues 108–145 (LREWMAELGKRSSVAVSWIGKVKTTAQMVALAWLLWRP) are periplasmic. A helical transmembrane segment spans residues 146–168 (NIWVEYAGIALFFVAAVLTLWSM). Residues 169–181 (LQYLSAARGDLLD) are Cytoplasmic-facing.

Belongs to the CDP-alcohol phosphatidyltransferase class-I family.

Its subcellular location is the cell inner membrane. The enzyme catalyses a CDP-1,2-diacyl-sn-glycerol + sn-glycerol 3-phosphate = a 1,2-diacyl-sn-glycero-3-phospho-(1'-sn-glycero-3'-phosphate) + CMP + H(+). It participates in phospholipid metabolism; phosphatidylglycerol biosynthesis; phosphatidylglycerol from CDP-diacylglycerol: step 1/2. Catalyzes the conversion of cytidine diphosphate diacylglycerol (CDP-DG) and glycerol 3-phosphate into phosphatidylglycerol. Essential for the synthesis of anionic phospholipids, thereby playing a role in balancing the ratio of zwitterionic and anionic phospholipids, which is thought to be important for normal membrane function. The sequence is that of CDP-diacylglycerol--glycerol-3-phosphate 3-phosphatidyltransferase from Salmonella choleraesuis (strain SC-B67).